A 254-amino-acid chain; its full sequence is MAVTDSTVVFISGVGKGIGAGIAKLYLSRPHHIVIGSVRDVSTPSVAELKASPTAPPGSKLLLVHIESTSSTDPAAAVEAIRAQGIDHIDIAIANAGAMPSTVPIEEVDTKDMLENYHINAIGPLLLFQALLPLLKKGTEPKWASVSTTAGSIGLVDPLAAWILPAYGGAKAALNWLTAGIASSQKEWMTTIALHPGLVQTGPGNWVAQKVGMGDKAPVTVGDSAASVVKLIDGLTKESNGKFYNAVDGTEVPW.

Ile-18, Ser-37, Glu-67, Asn-95, Tyr-167, Lys-171, Val-199, and Thr-201 together coordinate NADP(+). Tyr-167 acts as the Proton donor in catalysis. Lys-171 functions as the Lowers pKa of active site Tyr in the catalytic mechanism.

Belongs to the short-chain dehydrogenases/reductases (SDR) family.

Short-chain dehydrogenase; part of the gene cluster that mediates the biosynthesis of sordarial, a salicylic aldehyde structurally related to the phytotoxin pyriculol. The most interesting aspect of this pathway is formation of an aromatic product from the highly reducing polyketide synthase srdA. SrdA synthesizes a reduced polyketide chain from one molecule of acetyl-CoA and five molecules of malonyl-CoA. The polyketide chain is then reductively released as an aldehyde. The oxidoreductases srdC, srdD and srdE then oxidize one of the hydroxy groups to facilitate the intramolecular aldol condensation, followed by dehydration to yield a salicylic aldehyde. This aldehyde can undergo facile reduction by endogenous reductases to yield the alcohol 1-hydroxy-2-hydroxymethyl-3-pent-1,3-dienylbenzene. The flavin-dependent srdI counteract against the propensity of the aldehydes to be reduced under physiological conditions and is responsible for reoxidizing 1-hydroxy-2-hydroxymethyl-3-pent-1,3-dienylbenzene back to the salicylic aldehyde. This salicylic aldehyde is then selectively epoxidized by the cupin-domain-containing oxidoreductase srdB to yield the epoxide, which can be hydrolyzed stereoselectively by the hydrolase srdG to give the final product sordarial. This Neurospora crassa (strain ATCC 24698 / 74-OR23-1A / CBS 708.71 / DSM 1257 / FGSC 987) protein is Short-chain dehydrogenase srdF.